Reading from the N-terminus, the 515-residue chain is MADLSFSDGDPTVRTLLRRVLETADSRTPMRRRSTRINAQRRRSQTPYSNRQGSQTKTSARKQSHGARSVGRSTRVQGRGRLEEQTPRTLLRNILLTAPESSTVMPDPVVKPAQVPEVARSSRRESSRGSLELHLPELEPPSTLAPGLTAPGKRKQKLRLSVFQQEVDQGLPLSQEPRRSRSADVSSLASSFNLTFVLPGQPETVERPGLARRRPIRQLVNAGALLQDLEDNSLASALPGDSHRTPVAALPMDVGLEDTQPFSQSLAAFSLSGKHSLPSPSRPGVEDVERVMGPPSSGTRLQSRMSRSGPAASPSPFLEPQPPPAEPREAVGSNEAAEPKDQEGSSGYEETSARPASGELSSSTHDSLPAEQPPPSPGVAVLSSEPLESVTAKCPSRTQTAGPRRRQDPHKAGLSPYVKFFSFCTKMPVEKTALEIVEKCLDKYFQHLCNDLEVFASHAGRKIVKPEDLLLLMRRQGLVTDQVSQHVLVERYLPLEYRQQLIPCAFSGNSVFPAQ.

Disordered stretches follow at residues Ala24–Gln156 and Leu271–Lys411. Basic residues predominate over residues Pro29–Ser44. Residues Gln45–Thr58 show a composition bias toward polar residues. Thr86 is modified (phosphothreonine). Positions Ile94 to Pro375 are flexible stalk domain. Positions Ser296–Ser306 are enriched in polar residues. 6 positions are modified to phosphoserine: Ser313, Ser333, Ser345, Ser346, Ser357, and Ser376.

Belongs to the CENP-T/CNN1 family. As to quaternary structure, component of the CENPA-CAD complex, composed of CENPI, CENPK, CENPL, CENPO, CENPP, CENPQ, CENPR and CENPS. The CENPA-CAD complex is probably recruited on centromeres by the CENPA-NAC complex, at least composed of CENPA, CENPC, CENPH, CENPM, CENPN, CENPT and CENPU. Identified in a centromeric complex containing histones H2A, H2B, H3 and H4, and at least CENPA, CENPB, CENPC, CENPT, CENPN, HJURP, SUPT16H, SSRP1 and RSF1. Interacts (via N-terminus) with the NDC80 complex. Heterodimer with CENPW; this dimer coassembles with CENPS-CENPX heterodimers at centromeres to form the tetrameric CENP-T-W-S-X complex. Post-translationally, dynamically phosphorylated during the cell cycle. Phosphorylated during G2 phase, metaphase and anaphase, but not during telophase or G1 phase.

The protein resides in the nucleus. Its subcellular location is the chromosome. It is found in the centromere. It localises to the kinetochore. Component of the CENPA-NAC (nucleosome-associated) complex, a complex that plays a central role in assembly of kinetochore proteins, mitotic progression and chromosome segregation. The CENPA-NAC complex recruits the CENPA-CAD (nucleosome distal) complex and may be involved in incorporation of newly synthesized CENPA into centromeres. Part of a nucleosome-associated complex that binds specifically to histone H3-containing nucleosomes at the centromere, as opposed to nucleosomes containing CENPA. Component of the heterotetrameric CENP-T-W-S-X complex that binds and supercoils DNA, and plays an important role in kinetochore assembly. CENPT has a fundamental role in kinetochore assembly and function. It is one of the inner kinetochore proteins, with most further proteins binding downstream. Required for normal chromosome organization and normal progress through mitosis. This chain is Centromere protein T (Cenpt), found in Mus musculus (Mouse).